Here is a 314-residue protein sequence, read N- to C-terminus: 4-hydroxy-3-methylbut-2-enyl diphosphate reductase (314 aa).

Residue Cys-12 participates in [4Fe-4S] cluster binding. (2E)-4-hydroxy-3-methylbut-2-enyl diphosphate-binding residues include His-41 and His-74. The dimethylallyl diphosphate site is built by His-41 and His-74. Isopentenyl diphosphate is bound by residues His-41 and His-74. Cys-96 contributes to the [4Fe-4S] cluster binding site. His-124 is a (2E)-4-hydroxy-3-methylbut-2-enyl diphosphate binding site. His-124 lines the dimethylallyl diphosphate pocket. His-124 provides a ligand contact to isopentenyl diphosphate. Glu-126 (proton donor) is an active-site residue. Thr-167 is a binding site for (2E)-4-hydroxy-3-methylbut-2-enyl diphosphate. Cys-197 is a [4Fe-4S] cluster binding site. (2E)-4-hydroxy-3-methylbut-2-enyl diphosphate contacts are provided by Ser-225, Ser-226, Asn-227, and Ser-269. The dimethylallyl diphosphate site is built by Ser-225, Ser-226, Asn-227, and Ser-269. Isopentenyl diphosphate is bound by residues Ser-225, Ser-226, Asn-227, and Ser-269.

Belongs to the IspH family. [4Fe-4S] cluster serves as cofactor.

It catalyses the reaction isopentenyl diphosphate + 2 oxidized [2Fe-2S]-[ferredoxin] + H2O = (2E)-4-hydroxy-3-methylbut-2-enyl diphosphate + 2 reduced [2Fe-2S]-[ferredoxin] + 2 H(+). The catalysed reaction is dimethylallyl diphosphate + 2 oxidized [2Fe-2S]-[ferredoxin] + H2O = (2E)-4-hydroxy-3-methylbut-2-enyl diphosphate + 2 reduced [2Fe-2S]-[ferredoxin] + 2 H(+). The protein operates within isoprenoid biosynthesis; dimethylallyl diphosphate biosynthesis; dimethylallyl diphosphate from (2E)-4-hydroxy-3-methylbutenyl diphosphate: step 1/1. It participates in isoprenoid biosynthesis; isopentenyl diphosphate biosynthesis via DXP pathway; isopentenyl diphosphate from 1-deoxy-D-xylulose 5-phosphate: step 6/6. Functionally, catalyzes the conversion of 1-hydroxy-2-methyl-2-(E)-butenyl 4-diphosphate (HMBPP) into a mixture of isopentenyl diphosphate (IPP) and dimethylallyl diphosphate (DMAPP). Acts in the terminal step of the DOXP/MEP pathway for isoprenoid precursor biosynthesis. This Haemophilus influenzae (strain ATCC 51907 / DSM 11121 / KW20 / Rd) protein is 4-hydroxy-3-methylbut-2-enyl diphosphate reductase.